The primary structure comprises 92 residues: RNA-binding protein Hfq (92 aa).

The 60-residue stretch at 9–68 folds into the Sm domain; sequence DPYLNALRRERIPVSIYLVNGIKLQGQIESFDQFVILLKNTVSQMVYKHAISTVVPARSV. Over residues 69-81 the composition is skewed to polar residues; sequence SHNNGGTSHTQQA. Residues 69 to 92 are disordered; sequence SHNNGGTSHTQQAPAVEAVADKAE.

This sequence belongs to the Hfq family. Homohexamer.

RNA chaperone that binds small regulatory RNA (sRNAs) and mRNAs to facilitate mRNA translational regulation in response to envelope stress, environmental stress and changes in metabolite concentrations. Also binds with high specificity to tRNAs. The protein is RNA-binding protein Hfq of Actinobacillus pleuropneumoniae serotype 5b (strain L20).